Reading from the N-terminus, the 278-residue chain is Tryptophan synthase alpha chain (278 aa).

Residues glutamate 49 and aspartate 60 each act as proton acceptor in the active site.

It belongs to the TrpA family. Tetramer of two alpha and two beta chains.

It carries out the reaction (1S,2R)-1-C-(indol-3-yl)glycerol 3-phosphate + L-serine = D-glyceraldehyde 3-phosphate + L-tryptophan + H2O. It functions in the pathway amino-acid biosynthesis; L-tryptophan biosynthesis; L-tryptophan from chorismate: step 5/5. Functionally, the alpha subunit is responsible for the aldol cleavage of indoleglycerol phosphate to indole and glyceraldehyde 3-phosphate. The sequence is that of Tryptophan synthase alpha chain from Rhodopirellula baltica (strain DSM 10527 / NCIMB 13988 / SH1).